The sequence spans 398 residues: Phosphoglycerate kinase (398 aa).

Substrate contacts are provided by residues Asp24–Asn26, Arg39, His62–Arg65, Arg121, and Arg154. Residues Lys205, Gly296, Glu327, and Gly354–Ser357 contribute to the ATP site.

Belongs to the phosphoglycerate kinase family. In terms of assembly, monomer.

It localises to the cytoplasm. The enzyme catalyses (2R)-3-phosphoglycerate + ATP = (2R)-3-phospho-glyceroyl phosphate + ADP. It functions in the pathway carbohydrate degradation; glycolysis; pyruvate from D-glyceraldehyde 3-phosphate: step 2/5. This is Phosphoglycerate kinase from Trichodesmium erythraeum (strain IMS101).